Here is a 499-residue protein sequence, read N- to C-terminus: Patatin-like protein 6 (499 aa).

One can recognise a PNPLA domain in the interval 111-314 (LSIDSGGMRG…AMSNPTAAAI (204 aa)). The GGXR signature appears at 116–119 (GGMR). The active-site Nucleophile is serine 155. Catalysis depends on aspartate 301, which acts as the Proton acceptor. The short motif at 301 to 303 (DGG) is the DGA/G element.

It belongs to the patatin family. As to expression, highly expressed in siliques and at lower levels in roots and flowers.

Its function is as follows. Possesses non-specific lipolytic acyl hydrolase (LAH) activity. Hydrolyzes phospholipids as well as galactolipids. May play a role in disease resistance. In Arabidopsis thaliana (Mouse-ear cress), this protein is Patatin-like protein 6 (PLP6).